We begin with the raw amino-acid sequence, 300 residues long: MIKKYGIVAIVGKPNVGKSTLINAIMKKKVSIISNKPQTTRNAVKEIYEDDESAIIFTDTPGFHEPSNKLDLFLNHEIEISYKEANVILFVTTMDKELDANDFEIINLIKEANKENIILVISKAEMAKNQDQIDERIHFLKKHIAFKDVVQISALHVINIDKLINTIKNYLHKDVVTDYFRQKAEKEDKFVITEIIREQCLLNLNHEVPHGVGVEIDESKYNQEANHWIIKASIIIEKNSHKPIIIGQNGTMIKKISMGARKQLHEIYDCHISLTIFVKVENNWRDNNNIIKSLGYKIKK.

Positions 4–173 (KYGIVAIVGK…INTIKNYLHK (170 aa)) constitute an Era-type G domain. The G1 stretch occupies residues 12–19 (GKPNVGKS). 12–19 (GKPNVGKS) is a GTP binding site. A G2 region spans residues 38–42 (QTTRN). The segment at 59-62 (DTPG) is G3. GTP is bound by residues 59–63 (DTPGF) and 122–125 (SKAE). The interval 122–125 (SKAE) is G4. Residues 152 to 154 (ISA) form a G5 region. The KH type-2 domain occupies 204 to 282 (LNHEVPHGVG…SLTIFVKVEN (79 aa)).

The protein belongs to the TRAFAC class TrmE-Era-EngA-EngB-Septin-like GTPase superfamily. Era GTPase family. In terms of assembly, monomer.

Its subcellular location is the cytoplasm. The protein resides in the cell membrane. Its function is as follows. An essential GTPase that binds both GDP and GTP, with rapid nucleotide exchange. Plays a role in 16S rRNA processing and 30S ribosomal subunit biogenesis and possibly also in cell cycle regulation and energy metabolism. In Ureaplasma parvum serovar 3 (strain ATCC 27815 / 27 / NCTC 11736), this protein is GTPase Era.